We begin with the raw amino-acid sequence, 392 residues long: UPF0229 protein CPE1333 (392 aa).

The interval 75-100 (VTTGTGEERRGDRISSDKRKAISNNK) is disordered. Residues 80–94 (GEERRGDRISSDKRK) show a composition bias toward basic and acidic residues.

This sequence belongs to the UPF0229 family.

The sequence is that of UPF0229 protein CPE1333 from Clostridium perfringens (strain 13 / Type A).